A 541-amino-acid chain; its full sequence is Glucose-6-phosphate isomerase (541 aa).

E353 (proton donor) is an active-site residue. Active-site residues include H384 and K504.

The protein belongs to the GPI family.

Its subcellular location is the cytoplasm. It catalyses the reaction alpha-D-glucose 6-phosphate = beta-D-fructose 6-phosphate. Its pathway is carbohydrate biosynthesis; gluconeogenesis. The protein operates within carbohydrate degradation; glycolysis; D-glyceraldehyde 3-phosphate and glycerone phosphate from D-glucose: step 2/4. Its function is as follows. Catalyzes the reversible isomerization of glucose-6-phosphate to fructose-6-phosphate. This is Glucose-6-phosphate isomerase from Deinococcus radiodurans (strain ATCC 13939 / DSM 20539 / JCM 16871 / CCUG 27074 / LMG 4051 / NBRC 15346 / NCIMB 9279 / VKM B-1422 / R1).